A 261-amino-acid chain; its full sequence is Basic leucine zipper 19 (261 aa).

2 disordered regions span residues Met-1–Leu-22 and Glu-74–Arg-100. Polar residues predominate over residues Phe-8 to Glu-18. Positions Cys-88 to Arg-100 are enriched in basic and acidic residues. Positions Gly-89–Leu-155 constitute a bZIP domain. The tract at residues Lys-90 to Lys-113 is basic motif. Residues Leu-117–Leu-131 form a leucine-zipper region. Positions Asn-237–Ser-248 are enriched in low complexity. The segment at Asn-237 to Val-261 is disordered. Positions Asn-249–Val-261 are enriched in basic residues.

The protein localises to the nucleus. Its function is as follows. Transcription factor involved in the response to zinc ion deficiency. Binds to the consensus sequence 5'-[AG]TGTCGACA[CT]-3' also called zinc deficiency response element (ZDRE). The ZDRE sequence is conserved in the plant kingdom and present in the promoters of genes that constitute the primary response to zinc deficiency, comprising additional ZIP metal transporter genes. Required for zinc accumulation in roots. Mediates the expression of the zinc transporters ZIP3, ZIP4, ZIP5 and ZIP9 during growth in zinc-deficient conditions. ZIP9 transporter is involved in zinc uptake in roots. This Arabidopsis thaliana (Mouse-ear cress) protein is Basic leucine zipper 19.